The primary structure comprises 416 residues: Phosphoglycerate kinase (416 aa).

Residues Val23, Asp24, Phe25, Asn26, Gln38, Arg39, Ser62, His63, Gly65, Arg66, Leu121, Arg122, His168, and Arg169 each contribute to the (2R)-3-phosphoglycerate site. Residue Gly212 coordinates ADP. Residue Gly212 participates in CDP binding. 2 residues coordinate AMP: Ala213 and Lys214. Residue Ala213 participates in ATP binding. Mg(2+) is bound at residue Ala213. Asp217 contributes to the CDP binding site. Asp217 contacts Mg(2+). Lys218 contributes to the AMP binding site. Lys218 provides a ligand contact to ATP. Gly236 contributes to the ADP binding site. Gly236 serves as a coordination point for CDP. Residues Gly237 and Gly311 each contribute to the AMP site. 2 residues coordinate ATP: Gly237 and Gly311. Positions 336 and 341 each coordinate CDP. Phe341 serves as a coordination point for ADP. Glu342 contributes to the AMP binding site. Glu342, Asp373, and Thr374 together coordinate ATP. Position 373 (Asp373) interacts with Mg(2+).

It belongs to the phosphoglycerate kinase family. Monomer. Mg(2+) serves as cofactor.

The protein localises to the cytoplasm. Its subcellular location is the mitochondrion. It catalyses the reaction (2R)-3-phosphoglycerate + ATP = (2R)-3-phospho-glyceroyl phosphate + ADP. It participates in carbohydrate degradation; glycolysis; pyruvate from D-glyceraldehyde 3-phosphate: step 2/5. In terms of biological role, catalyzes one of the two ATP producing reactions in the glycolytic pathway via the reversible conversion of 1,3-diphosphoglycerate to 3-phosphoglycerate. Both L- and D- forms of purine and pyrimidine nucleotides can be used as substrates, but the activity is much lower on pyrimidines. Negatively regulates the biosynthesis of acetyl-CoA from pyruvate in the mitochondrion. The protein is Phosphoglycerate kinase (PGK1) of Debaryomyces hansenii (strain ATCC 36239 / CBS 767 / BCRC 21394 / JCM 1990 / NBRC 0083 / IGC 2968) (Yeast).